Reading from the N-terminus, the 116-residue chain is Large ribosomal subunit protein bL17 (116 aa).

The protein belongs to the bacterial ribosomal protein bL17 family. In terms of assembly, part of the 50S ribosomal subunit. Contacts protein L32.

The chain is Large ribosomal subunit protein bL17 from Helicobacter pylori (strain G27).